The primary structure comprises 513 residues: MATSSSAWLMFSDHYPEILIAIACFLIFSLLLSARSSSEDSLPYNWPIFGMLPAIISNNQFNDFTTARLRKMGWTFIFKGPWLLDMDYIFTCDPSNINHMFNDNFENYPKGELGKVFDIFGNNIFNADGDLWHDHRKMAQTILWDGNYRTMQATFIRNKMDNALIPILDSAACKRKPVDLQDVLLRFTFDTSCFSVLAADPESLTMEFPPVPFSKAADQALDAALTRHITPRLIWKLKRFFNVGSERTLAVAWKVIDSYIYDKIAELKAKRKLVGKINSYDAVSFYMDNFNIHDDKFLRDNAFTYLLAQRNTQSLTMTWLFYALFENPKVELKILSELKSIVDESSERKFNDGFTLFDSNMIQSAIYLHAALCEALRIYPPVPFEIKDAHKADVLPSGHKVRAGEKILFSPYAMARMKGIWGDDCLEFKPERWITGNGTLKHEPAYKFFAFSAGPRICLGKELSFTQMKMVVATIIYNFHLQMVKGHVVEQSNSILMDMKHGLMVQVRKRSVM.

A helical transmembrane segment spans residues 14-34 (HYPEILIAIACFLIFSLLLSA). Position 458 (Cys-458) interacts with heme.

Belongs to the cytochrome P450 family. It depends on heme as a cofactor.

The protein localises to the membrane. The catalysed reaction is 4'-O-methylnorbelladine + reduced [NADPH--hemoprotein reductase] + O2 = (10bR,4aS)-noroxomaritidine + oxidized [NADPH--hemoprotein reductase] + 2 H2O + H(+). It carries out the reaction 4'-O-methylnorbelladine + reduced [NADPH--hemoprotein reductase] + O2 = (10bS,4aR)-noroxomaritidine + oxidized [NADPH--hemoprotein reductase] + 2 H2O + H(+). It functions in the pathway alkaloid biosynthesis. Cytochrome P450 that catalyzes an intramolecular para-para' C-C phenol coupling of 4'-O-methylnorbelladine in alkaloids biosynthesis, including haemanthamine- and crinamine-type alkaloids, promising anticancer agents. Catalyzes the formation of (10bR,4aS)-noroxomaritidine and (10bS,4aR)-noroxomaritidine from 4'-O-methylnorbelladine. This is Noroxomaritidine synthase 2 from Narcissus aff. pseudonarcissus MK-2014 (Daffodil).